Reading from the N-terminus, the 359-residue chain is Palmitoyltransferase PFA5 (359 aa).

4 helical membrane-spanning segments follow: residues W10–Y30, A47–W67, L164–V184, and L206–F226. The DHHC domain maps to V120–M170.

This sequence belongs to the DHHC palmitoyltransferase family. PFA5 subfamily. Autopalmitoylated.

The protein resides in the membrane. The enzyme catalyses L-cysteinyl-[protein] + hexadecanoyl-CoA = S-hexadecanoyl-L-cysteinyl-[protein] + CoA. The protein is Palmitoyltransferase PFA5 (PFA5) of Eremothecium gossypii (strain ATCC 10895 / CBS 109.51 / FGSC 9923 / NRRL Y-1056) (Yeast).